The sequence spans 1063 residues: Structural polyprotein (1063 aa).

The segment at 1–131 (MASTTPITME…LGPPTNPFQA (131 aa)) is disordered. Residues 18-34 (AQSRALRAGLAAGASQS) are compositionally biased toward low complexity. A human C1QBP/SF2P32-binding region spans residues 30–69 (GASQSRRPRPPRQRDSSTSGDDSGRDSGGPRRRRGNRGRG). S46 carries the phosphoserine; by host modification. Residues 59–69 (PRRRRGNRGRG) are compositionally biased toward basic residues. Residues 70–87 (QRKDWSRAPPPPEERQES) show a composition bias toward basic and acidic residues. A compositionally biased stretch (pro residues) spans 93-107 (APKPSRAPPQQPQPP). C153 and C197 form a disulfide bridge. The segment at 279–300 (GAPQAFLAGLLLAAVAVGTARA) is functions as E2 signal peptide. Over 301 to 534 (GLQPRADMAA…LWLATANALS (234 aa)) the chain is Extracellular. 4 N-linked (GlcNAc...) asparagine; by host glycosylation sites follow: N353, N371, N410, and N429. The helical transmembrane segment at 535 to 555 (LDHAFAAFVLLVPWVLIFMVC) threads the bilayer. Residues 556-582 (RRACRRRGAAAALTAVVLQGYNPPAYG) lie on the Cytoplasmic side of the membrane. The tract at residues 563–582 (GAAAALTAVVLQGYNPPAYG) is functions as E1 signal peptide. The Extracellular portion of the chain corresponds to 583–1028 (EEAFTYLCTA…QTWAEWAAAH (446 aa)). 8 disulfides stabilise this stretch: C590–C595, C619–C824, C641–C653, C699–C712, C758–C767, C807–C817, C931–C934, and C950–C983. Residue N658 is glycosylated (N-linked (GlcNAc...) asparagine; by host). Residues N670 and A671 each coordinate Ca(2+). Ca(2+) is bound by residues D718 and T719. Residues N759 and N791 are each glycosylated (N-linked (GlcNAc...) asparagine; by host). 2 O-linked (GalNAc...) threonine; by host glycosylation sites follow: T1011 and T1012. A helical membrane pass occupies residues 1029–1049 (WWQLTLGAICALLLAGLLACC). Residues 1050–1063 (AKCLYYLRGAIAPR) lie on the Cytoplasmic side of the membrane.

As to quaternary structure, homodimer; further assembles into homooligomer. Interacts with human C1QBP. Interacts (via N-terminus) with protease/methyltransferase p150. In terms of assembly, heterodimer with spike glycoprotein E2. Heterodimer with spike glycoprotein E1. Structural polyprotein: Specific enzymatic cleavages in vivo yield mature proteins. Two signal peptidase-mediated cleavages within the polyprotein produce the structural proteins capsid, E2, and E1. The E2 signal peptide remains attached to the C-terminus of the capsid protein after cleavage by the signal peptidase. Another signal peptide at E2 C-terminus directs E1 to the ER, with a similar mechanism. In terms of processing, contains three N-linked oligosaccharides. Post-translationally, capsid is phosphorylated on Ser-46 by host. This phosphorylation negatively regulates capsid protein RNA-binding activity. Dephosphorylated by human PP1A.

Its subcellular location is the virion. It is found in the host cytoplasm. It localises to the host mitochondrion. The protein resides in the virion membrane. The protein localises to the host Golgi apparatus membrane. Its function is as follows. Capsid protein interacts with genomic RNA and assembles into icosahedric core particles 65-70 nm in diameter. The resulting nucleocapsid eventually associates with the cytoplasmic domain of E2 at the cell membrane, leading to budding and formation of mature virions from host Golgi membranes. Phosphorylation negatively regulates RNA-binding activity, possibly delaying virion assembly during the viral replication phase. Capsid protein dimerizes and becomes disulfide-linked in the virion. Modulates genomic RNA replication. Modulates subgenomic RNA synthesis by interacting with human C1QBP/SF2P32. Induces both perinuclear clustering of mitochondria and the formation of electron-dense intermitochondrial plaques, both hallmarks of rubella virus infected cells. Induces apoptosis when expressed in transfected cells. Functionally, responsible for viral attachment to target host cell, by binding to the cell receptor. Its transport to the plasma membrane depends on interaction with E1 protein. The surface glycoproteins display an irregular helical organization and a pseudo-tetrameric inner nucleocapsid arrangement. In terms of biological role, class II viral fusion protein. Fusion activity is inactive as long as E1 is bound to E2 in mature virion. After virus attachment to target cell and clathrin-mediated endocytosis, acidification of the endosome would induce dissociation of E1/E2 heterodimer and concomitant trimerization of the E1 subunits. This E1 homotrimer is fusion active, and promotes release of viral nucleocapsid in cytoplasm after endosome and viral membrane fusion. The cytoplasmic tail of spike glycoprotein E1 modulates virus release. The surface glycoproteins display an irregular helical organization and a pseudo-tetrameric inner nucleocapsid arrangement. The sequence is that of Structural polyprotein from Homo sapiens (Human).